Reading from the N-terminus, the 196-residue chain is Probable GTP-binding protein EngB (196 aa).

Positions 22–194 (DKKEIAFAGR…LKTIGEILGD (173 aa)) constitute an EngB-type G domain. Residues 30–37 (GRSNVGKS), 56–60 (GKTRS), 74–77 (DLPG), 141–144 (TKSD), and 173–175 (FSS) each bind GTP. 2 residues coordinate Mg(2+): serine 37 and threonine 58.

Belongs to the TRAFAC class TrmE-Era-EngA-EngB-Septin-like GTPase superfamily. EngB GTPase family. It depends on Mg(2+) as a cofactor.

Its function is as follows. Necessary for normal cell division and for the maintenance of normal septation. This chain is Probable GTP-binding protein EngB, found in Petrotoga mobilis (strain DSM 10674 / SJ95).